The chain runs to 256 residues: Thiazole synthase (256 aa).

Catalysis depends on lysine 95, which acts as the Schiff-base intermediate with DXP. 1-deoxy-D-xylulose 5-phosphate-binding positions include glycine 156, 182-183 (AG), and 204-205 (NT).

It belongs to the ThiG family. In terms of assembly, homotetramer. Forms heterodimers with either ThiH or ThiS.

It localises to the cytoplasm. It catalyses the reaction [ThiS sulfur-carrier protein]-C-terminal-Gly-aminoethanethioate + 2-iminoacetate + 1-deoxy-D-xylulose 5-phosphate = [ThiS sulfur-carrier protein]-C-terminal Gly-Gly + 2-[(2R,5Z)-2-carboxy-4-methylthiazol-5(2H)-ylidene]ethyl phosphate + 2 H2O + H(+). It participates in cofactor biosynthesis; thiamine diphosphate biosynthesis. Functionally, catalyzes the rearrangement of 1-deoxy-D-xylulose 5-phosphate (DXP) to produce the thiazole phosphate moiety of thiamine. Sulfur is provided by the thiocarboxylate moiety of the carrier protein ThiS. In vitro, sulfur can be provided by H(2)S. The protein is Thiazole synthase of Salmonella choleraesuis (strain SC-B67).